Consider the following 327-residue polypeptide: MWVPAVANLLLLSLGLLEAIQAQSHLVTRRDLFSQETPLDMAPASFDDQYVGCAAAMTAALPHLNLTEFQVNKVYADGWALASSQWRERSAWGPEWGLSTTRLPPPPAGFRDEHGVALLAYTANSPLHKEFNAAVRQAGRSRAHYLQHFSFKTLHFLLTEALQLLGRDQRMPRCRQVFRGVHGLRFRPAGPGTTVRLGGFASASLKNVAAQQFGEDTFFGIWTCLGVPIQGYSFFPGEEEVLIPPFETFQVINASRPAQGPARIYLKALGKRSSYNCEYIKEMQCKSRPCHLDNSASAQERLSTAWSLLLLLAFLAVGPFPGSPGLF.

A signal peptide spans methionine 1 to alanine 22. 2 disulfide bridges follow: cysteine 53–cysteine 277 and cysteine 174–cysteine 224. N-linked (GlcNAc...) asparagine glycosylation occurs at asparagine 65. In terms of domain architecture, TR mART core spans lysine 73–serine 273. 2 residues coordinate NAD(+): tyrosine 121 and arginine 179. Catalysis depends on residues arginine 179 and serine 202. Residue serine 233 participates in NAD(+) binding. Glutamate 240 is a catalytic residue. Asparagine 253 carries an N-linked (GlcNAc...) asparagine glycan. A lipid anchor (GPI-anchor amidated serine) is attached at serine 295. Residues alanine 296 to phenylalanine 327 constitute a propeptide, removed in mature form.

The protein belongs to the Arg-specific ADP-ribosyltransferase family. As to expression, primarily in skeletal and cardiac muscle.

It localises to the sarcoplasmic reticulum membrane. The enzyme catalyses L-arginyl-[protein] + NAD(+) = N(omega)-(ADP-D-ribosyl)-L-arginyl-[protein] + nicotinamide + H(+). Functionally, has ADP-ribosyltransferase activity toward GLP1R. This chain is GPI-linked NAD(P)(+)--arginine ADP-ribosyltransferase 1 (ART1), found in Oryctolagus cuniculus (Rabbit).